The chain runs to 210 residues: Orotate phosphoribosyltransferase (210 aa).

5-phospho-alpha-D-ribose 1-diphosphate-binding positions include Arg-94, Lys-98, His-100, and 120-128; that span reads EDLISTGGS. Position 124 (Ser-124) interacts with orotate.

Belongs to the purine/pyrimidine phosphoribosyltransferase family. PyrE subfamily. In terms of assembly, homodimer. Mg(2+) is required as a cofactor.

The catalysed reaction is orotidine 5'-phosphate + diphosphate = orotate + 5-phospho-alpha-D-ribose 1-diphosphate. Its pathway is pyrimidine metabolism; UMP biosynthesis via de novo pathway; UMP from orotate: step 1/2. Functionally, catalyzes the transfer of a ribosyl phosphate group from 5-phosphoribose 1-diphosphate to orotate, leading to the formation of orotidine monophosphate (OMP). This is Orotate phosphoribosyltransferase from Bacillus anthracis (strain A0248).